The following is a 197-amino-acid chain: Putative AgrB-like protein (197 aa).

The next 4 helical transmembrane spans lie at 29 to 49 (FGFTIILHYLFTLLLVLAVGL), 79 to 99 (SIGCTLLSVLFITAISWVPFA), 102 to 122 (YAWILYGISGGLLIWKYAPYY), and 143 to 163 (ILIVLFIILAMLMSTQGLVLG).

This sequence belongs to the AgrB family.

It is found in the cell membrane. Its function is as follows. May be involved in the proteolytic processing of a quorum sensing system signal molecule precursor. This chain is Putative AgrB-like protein, found in Halalkalibacterium halodurans (strain ATCC BAA-125 / DSM 18197 / FERM 7344 / JCM 9153 / C-125) (Bacillus halodurans).